A 251-amino-acid chain; its full sequence is GTP cyclohydrolase 1 type 2 homolog (251 aa).

A divalent metal cation is bound by residues H63, H64, D101, H219, and E223.

Belongs to the GTP cyclohydrolase I type 2/NIF3 family. Homohexamer.

In Pasteurella multocida (strain Pm70), this protein is GTP cyclohydrolase 1 type 2 homolog.